Here is a 782-residue protein sequence, read N- to C-terminus: Endonuclease MutS2 (782 aa).

336-343 (GPNTGGKT) lines the ATP pocket. The 76-residue stretch at 707–782 (LDLRGYRYEE…GFGVTVAELK (76 aa)) folds into the Smr domain.

It belongs to the DNA mismatch repair MutS family. MutS2 subfamily. In terms of assembly, homodimer. Binds to stalled ribosomes, contacting rRNA.

Its function is as follows. Endonuclease that is involved in the suppression of homologous recombination and thus may have a key role in the control of bacterial genetic diversity. Functionally, acts as a ribosome collision sensor, splitting the ribosome into its 2 subunits. Detects stalled/collided 70S ribosomes which it binds and splits by an ATP-hydrolysis driven conformational change. Acts upstream of the ribosome quality control system (RQC), a ribosome-associated complex that mediates the extraction of incompletely synthesized nascent chains from stalled ribosomes and their subsequent degradation. Probably generates substrates for RQC. The polypeptide is Endonuclease MutS2 (Staphylococcus carnosus (strain TM300)).